Here is a 154-residue protein sequence, read N- to C-terminus: Endoribonuclease YbeY (154 aa).

Residues H113, H117, and H123 each coordinate Zn(2+).

Belongs to the endoribonuclease YbeY family. The cofactor is Zn(2+).

It is found in the cytoplasm. Functionally, single strand-specific metallo-endoribonuclease involved in late-stage 70S ribosome quality control and in maturation of the 3' terminus of the 16S rRNA. The chain is Endoribonuclease YbeY from Aeromonas salmonicida (strain A449).